The chain runs to 197 residues: UPF0301 protein BAV3012 (197 aa).

Belongs to the UPF0301 (AlgH) family.

The sequence is that of UPF0301 protein BAV3012 from Bordetella avium (strain 197N).